Reading from the N-terminus, the 321-residue chain is Acetyl-coenzyme A carboxylase carboxyl transferase subunit alpha (321 aa).

The region spanning 37–298 is the CoA carboxyltransferase C-terminal domain; that stretch reads DLDDEIKRLQ…KQRILSDLED (262 aa).

Belongs to the AccA family. Acetyl-CoA carboxylase is a heterohexamer composed of biotin carboxyl carrier protein (AccB), biotin carboxylase (AccC) and two subunits each of ACCase subunit alpha (AccA) and ACCase subunit beta (AccD).

The protein localises to the cytoplasm. The catalysed reaction is N(6)-carboxybiotinyl-L-lysyl-[protein] + acetyl-CoA = N(6)-biotinyl-L-lysyl-[protein] + malonyl-CoA. Its pathway is lipid metabolism; malonyl-CoA biosynthesis; malonyl-CoA from acetyl-CoA: step 1/1. Component of the acetyl coenzyme A carboxylase (ACC) complex. First, biotin carboxylase catalyzes the carboxylation of biotin on its carrier protein (BCCP) and then the CO(2) group is transferred by the carboxyltransferase to acetyl-CoA to form malonyl-CoA. This Mannheimia succiniciproducens (strain KCTC 0769BP / MBEL55E) protein is Acetyl-coenzyme A carboxylase carboxyl transferase subunit alpha.